The sequence spans 375 residues: Phospho-N-acetylmuramoyl-pentapeptide-transferase (375 aa).

10 helical membrane-spanning segments follow: residues 2-22 (IGLL…TPLF), 55-75 (AVII…LAVL), 82-102 (PTAS…VGFV), 120-140 (GKII…LNFP), 158-178 (IPWL…FVIW), 198-218 (GLAT…SLFQ), 237-257 (PMDL…FLWW), 264-284 (IFMG…FAIF), 289-309 (ILVA…IIQV), and 345-365 (WLLS…DWLI).

It belongs to the glycosyltransferase 4 family. MraY subfamily. Mg(2+) is required as a cofactor.

It is found in the cell membrane. It carries out the reaction UDP-N-acetyl-alpha-D-muramoyl-L-alanyl-gamma-D-glutamyl-meso-2,6-diaminopimeloyl-D-alanyl-D-alanine + di-trans,octa-cis-undecaprenyl phosphate = di-trans,octa-cis-undecaprenyl diphospho-N-acetyl-alpha-D-muramoyl-L-alanyl-D-glutamyl-meso-2,6-diaminopimeloyl-D-alanyl-D-alanine + UMP. It participates in cell wall biogenesis; peptidoglycan biosynthesis. Catalyzes the initial step of the lipid cycle reactions in the biosynthesis of the cell wall peptidoglycan: transfers peptidoglycan precursor phospho-MurNAc-pentapeptide from UDP-MurNAc-pentapeptide onto the lipid carrier undecaprenyl phosphate, yielding undecaprenyl-pyrophosphoryl-MurNAc-pentapeptide, known as lipid I. The chain is Phospho-N-acetylmuramoyl-pentapeptide-transferase from Micrococcus luteus (strain ATCC 4698 / DSM 20030 / JCM 1464 / CCM 169 / CCUG 5858 / IAM 1056 / NBRC 3333 / NCIMB 9278 / NCTC 2665 / VKM Ac-2230) (Micrococcus lysodeikticus).